Reading from the N-terminus, the 176-residue chain is DELTA-stichotoxin-She4a (176 aa).

Residues 2-11 (ELAGTIIDGA) form a plays an important role in the hemolytic activity region. The interval 10-29 (GASLTFEVLDKVLGELGKVS) is N-terminal region. Positions 53, 86, 104, 106, 132, 136, and 137 each coordinate phosphocholine. A trp-rich region, which is important for the binding to lipid membrane region spans residues 104-119 (SVPFDYNWYSNWWDVK). Residues 142 to 144 (RGD) carry the Cell attachment site motif.

In terms of assembly, octamer or nonamer in membranes. Monomer in the soluble state.

The protein localises to the secreted. The protein resides in the nematocyst. It localises to the target cell membrane. Its function is as follows. Pore-forming protein that forms cations-selective hydrophilic pores of around 1 nm and causes cardiac stimulation and cytolysis. Pore formation is a multi-step process that involves specific recognition of membrane sphingomyelin (but neither cholesterol nor phosphatidylcholine) using aromatic rich region and adjacent phosphocholine (POC) binding site, firm binding to the membrane (mainly driven by hydrophobic interactions) accompanied by the transfer of the N-terminal region to the lipid-water interface and finally pore formation after oligomerization of monomers. Cytolytic effects include red blood cells hemolysis, platelet aggregation and lysis, cytotoxic and cytostatic effects on fibroblasts. Lethality in mammals has been ascribed to severe vasospasm of coronary vessels, cardiac arrhythmia, and inotropic effects. The polypeptide is DELTA-stichotoxin-She4a (Stichodactyla helianthus (Sun anemone)).